Reading from the N-terminus, the 130-residue chain is MLYHDTQSRVIAFRYLLMILKNLKIKIRTLAPNTPKSKPANEKLPAACAEPISRTSPNNQRPSDEPIIPMMIFINRPMSLFMTCSAIQPIKAPTIIAEIQPIFFSSMSSLYTKKLKSIHDFKKRKMIYKR.

This is an uncharacterized protein from Pasteurella multocida (strain Pm70).